Here is a 133-residue protein sequence, read N- to C-terminus: Small ribosomal subunit protein uS8 (133 aa).

The protein belongs to the universal ribosomal protein uS8 family. In terms of assembly, part of the 30S ribosomal subunit. Contacts proteins S5 and S12.

One of the primary rRNA binding proteins, it binds directly to 16S rRNA central domain where it helps coordinate assembly of the platform of the 30S subunit. The chain is Small ribosomal subunit protein uS8 from Prochlorococcus marinus (strain MIT 9515).